We begin with the raw amino-acid sequence, 507 residues long: Transmembrane protein 184 homolog DDB_G0276041 (507 aa).

Helical transmembrane passes span 13 to 33, 50 to 70, 88 to 108, 141 to 161, 179 to 199, 222 to 242, and 260 to 280; these read IVMLSIGSFFALGSIIIAVIL, IVRIIMIAPIYAIHSLLSLFF, AYVLYCFFKLLICFLGGEEAL, LGLVLQYAIIKPTLAIVAAIL, LWITVINNISVLIALYFLVMF, VVFFLFWQTVVITVLIWFDAL, and FLVCIEMFITSIAMGICFSYS. Residues N360, N375, N470, N473, N477, and N498 are each glycosylated (N-linked (GlcNAc...) asparagine). Residues 448 to 500 are disordered; it reads NGASNNNNNNNNNNNNINNNNNNNSNNSNNNSNSQFESIDINSNSVNSNKNQS. The segment covering 451–500 has biased composition (low complexity); sequence SNNNNNNNNNNNNINNNNNNNSNNSNNNSNSQFESIDINSNSVNSNKNQS.

This sequence belongs to the TMEM184 family.

The protein resides in the cell membrane. Probable transporter. In Dictyostelium discoideum (Social amoeba), this protein is Transmembrane protein 184 homolog DDB_G0276041 (tmem184B).